A 62-amino-acid polypeptide reads, in one-letter code: uncharacterized protein (62 aa).

The disordered stretch occupies residues 1-62 (MTSTQNLKDK…PPKKSLSQLP (62 aa)). The span at 7–29 (LKDKFEEEIRQQKEGKGKKEKVW) shows a compositional bias: basic and acidic residues. The span at 32-43 (HSDSSYNKQTAV) shows a compositional bias: polar residues.

This is an uncharacterized protein from Dictyostelium discoideum (Social amoeba).